Here is a 648-residue protein sequence, read N- to C-terminus: Copper methylamine oxidase (648 aa).

Positions 1–9 are excised as a propeptide; the sequence is MTLNAESEA. Position 299–310 (299–310) interacts with substrate; sequence AFDSGEYNIGNM. The active-site Proton acceptor is the Asp301. Cys320 and Cys346 are joined by a disulfide. A substrate-binding site is contributed by 382–387; that stretch reads VANYEY. The active-site Schiff-base intermediate with substrate; via topaquinone is Tyr385. Tyr385 carries the 2',4',5'-topaquinone modification. Residues His436 and His438 each contribute to the Cu cation site. Asp445, Phe446, and Asp584 together coordinate Mn(2+). His595 contributes to the Cu cation binding site. The interval 629–648 is disordered; it reads PTSTSTTQTGEADTCCHTDK.

Belongs to the copper/topaquinone oxidase family. Homodimer. The cofactor is Cu cation. Zn(2+) serves as cofactor. L-topaquinone is required as a cofactor. Requires Mn(2+) as cofactor. In terms of processing, topaquinone (TPQ) is generated by copper-dependent autoxidation of a specific tyrosyl residue.

The enzyme catalyses a primary methyl amine + O2 + H2O = an aldehyde + H2O2 + NH4(+). The chain is Copper methylamine oxidase (maoII) from Arthrobacter sp. (strain P1).